A 324-amino-acid polypeptide reads, in one-letter code: tRNA U34 carboxymethyltransferase (324 aa).

Carboxy-S-adenosyl-L-methionine-binding positions include lysine 91, tryptophan 105, lysine 110, glycine 130, 152 to 154 (DPS), 181 to 182 (IE), methionine 196, tyrosine 200, and arginine 315.

It belongs to the class I-like SAM-binding methyltransferase superfamily. CmoB family. Homotetramer.

It carries out the reaction carboxy-S-adenosyl-L-methionine + 5-hydroxyuridine(34) in tRNA = 5-carboxymethoxyuridine(34) in tRNA + S-adenosyl-L-homocysteine + H(+). Functionally, catalyzes carboxymethyl transfer from carboxy-S-adenosyl-L-methionine (Cx-SAM) to 5-hydroxyuridine (ho5U) to form 5-carboxymethoxyuridine (cmo5U) at position 34 in tRNAs. The sequence is that of tRNA U34 carboxymethyltransferase from Aliivibrio salmonicida (strain LFI1238) (Vibrio salmonicida (strain LFI1238)).